A 254-amino-acid polypeptide reads, in one-letter code: Large ribosomal subunit protein uL15m (254 aa).

Residues 1-78 (MFNILSRVCR…GSGQRRGRRI (78 aa)) constitute a mitochondrion transit peptide. A disordered region spans residues 44–104 (NYQSKKRVGR…KVGHSTGHLK (61 aa)). Residues 64-79 (GRGHKGSGQRRGRRIK) show a composition bias toward basic residues.

It belongs to the universal ribosomal protein uL15 family. In terms of assembly, component of the mitochondrial large ribosomal subunit (mt-LSU). Mature yeast 74S mitochondrial ribosomes consist of a small (37S) and a large (54S) subunit. The 37S small subunit contains a 15S ribosomal RNA (15S mt-rRNA) and at least 32 different proteins. The 54S large subunit contains a 21S rRNA (21S mt-rRNA) and at least 45 different proteins.

It is found in the mitochondrion. Its function is as follows. Component of the mitochondrial ribosome (mitoribosome), a dedicated translation machinery responsible for the synthesis of mitochondrial genome-encoded proteins, including at least some of the essential transmembrane subunits of the mitochondrial respiratory chain. The mitoribosomes are attached to the mitochondrial inner membrane and translation products are cotranslationally integrated into the membrane. The polypeptide is Large ribosomal subunit protein uL15m (mrpl10) (Schizosaccharomyces pombe (strain 972 / ATCC 24843) (Fission yeast)).